A 365-amino-acid polypeptide reads, in one-letter code: MTEAWNVAVFAARRSRDDDDTTRGSVFTYTNTNNTRGPFEGPNYHIAPRWVYNLVSFFMIIVVIASCFTNGLVLVATAKFKKLRHPLNWILVNLAFVDLVETLVASTISVFNQIFGYFILGHPLCVIEGYVVSSCGITGLWSLAIISWERWFVVCKPFGNIKFDSKLAIIGIVFSWVWAWGWSAPPIFGWSRYWPHGLKTSCGPDVFSGSVELGCQSFMLTLMITCCFLPLFIIIVCYLQVWMAIRAVAAQQKESESTQKAEREVSRMVVVMIVAFCICWGPYASFVSFAAANPGYAFHPLAAALPAYFAKSATIYNPVIYVFMNRQFRNCIMQLFGKKVDDGSEASTTSRTEVSSVSNSSVAPA.

Residues 1–51 (MTEAWNVAVFAARRSRDDDDTTRGSVFTYTNTNNTRGPFEGPNYHIAPRWV) lie on the Extracellular side of the membrane. N-linked (GlcNAc...) asparagine glycosylation is present at Asn-33. A helical membrane pass occupies residues 52–76 (YNLVSFFMIIVVIASCFTNGLVLVA). At 77–88 (TAKFKKLRHPLN) the chain is on the cytoplasmic side. Residues 89–113 (WILVNLAFVDLVETLVASTISVFNQ) form a helical membrane-spanning segment. Over 114–128 (IFGYFILGHPLCVIE) the chain is Extracellular. Cys-125 and Cys-202 form a disulfide bridge. Residues 129–148 (GYVVSSCGITGLWSLAIISW) traverse the membrane as a helical segment. Over 149–167 (ERWFVVCKPFGNIKFDSKL) the chain is Cytoplasmic. The chain crosses the membrane as a helical span at residues 168–191 (AIIGIVFSWVWAWGWSAPPIFGWS). The Extracellular portion of the chain corresponds to 192–217 (RYWPHGLKTSCGPDVFSGSVELGCQS). A helical transmembrane segment spans residues 218–245 (FMLTLMITCCFLPLFIIIVCYLQVWMAI). Residues 246-267 (RAVAAQQKESESTQKAEREVSR) lie on the Cytoplasmic side of the membrane. The chain crosses the membrane as a helical span at residues 268–291 (MVVVMIVAFCICWGPYASFVSFAA). The Extracellular segment spans residues 292-299 (ANPGYAFH). Residues 300-324 (PLAAALPAYFAKSATIYNPVIYVFM) form a helical membrane-spanning segment. The residue at position 311 (Lys-311) is an N6-(retinylidene)lysine. The Cytoplasmic segment spans residues 325-365 (NRQFRNCIMQLFGKKVDDGSEASTTSRTEVSSVSNSSVAPA). The interval 342-365 (DGSEASTTSRTEVSSVSNSSVAPA) is disordered. Over residues 345 to 365 (EASTTSRTEVSSVSNSSVAPA) the composition is skewed to low complexity.

It belongs to the G-protein coupled receptor 1 family. Opsin subfamily. In terms of processing, phosphorylated on some or all of the serine and threonine residues present in the C-terminal region. As to expression, in this lizard the color pigments are found in the rod-shaped photoreceptor cells which have been derived from ancestral cone-like photoreceptors.

It is found in the membrane. Its function is as follows. Visual pigments are the light-absorbing molecules that mediate vision. They consist of an apoprotein, opsin, covalently linked to cis-retinal. The polypeptide is Green-sensitive opsin P521 (Gekko gecko (Tokay gecko)).